The chain runs to 341 residues: Glucokinase (341 aa).

7–12 (GDIGGT) lines the ATP pocket.

The protein belongs to the bacterial glucokinase family.

The protein resides in the cytoplasm. The enzyme catalyses D-glucose + ATP = D-glucose 6-phosphate + ADP + H(+). This Nostoc punctiforme (strain ATCC 29133 / PCC 73102) protein is Glucokinase.